Reading from the N-terminus, the 668-residue chain is Golgin candidate 2 (668 aa).

The tract at residues 22–317 is disordered; it reads QAADSLRKDE…RQREERRRRR (296 aa). Residues 26–39 show a composition bias toward basic and acidic residues; that stretch reads SLRKDEKSETHDEV. 2 stretches are compositionally biased toward polar residues: residues 64–86 and 100–113; these read GSDSGSGSQRNSTEQKPSYLSSS and SAPSQSLTQDNTKL. Composition is skewed to low complexity over residues 123 to 141 and 168 to 178; these read STPNQRTSTSTSRSPGGTS and SSSSNVVNSRG. 3 stretches are compositionally biased toward basic and acidic residues: residues 184 to 207, 215 to 237, and 250 to 259; these read TNKEPSDKEVSSPSDADMKNRNAP, THKESEKDVSGKTPPLDDSRRSA, and GKRDGRESRR. A compositionally biased stretch (acidic residues) spans 290 to 302; that stretch reads DESESDYESDSST. A compositionally biased stretch (basic and acidic residues) spans 303–312; it reads DSERERQREE. A coiled-coil region spans residues 331–539; the sequence is AVIKERENMV…SQVEALSSEK (209 aa). 2 helical membrane-spanning segments follow: residues 594-614 and 622-642; these read KHLGWLVMQLNAIFISGTVFL and IWAVVYLVCLHLWVLYILLSH.

Its subcellular location is the golgi apparatus membrane. Its function is as follows. Golgi matrix protein playing a role in tethering of vesicles to Golgi membranes and in maintaining the overall structure of the Golgi apparatus. The sequence is that of Golgin candidate 2 (GC2) from Arabidopsis thaliana (Mouse-ear cress).